Consider the following 75-residue polypeptide: Sec-independent protein translocase protein TatA (75 aa).

A helical membrane pass occupies residues 1-21; the sequence is MGSFSIWHWLVVLAIVLLVFG. Positions 40–75 are disordered; the sequence is KKGMRDEDKPNAQLGDESRSQDASRTAQDEHDRTPR.

This sequence belongs to the TatA/E family. The Tat system comprises two distinct complexes: a TatABC complex, containing multiple copies of TatA, TatB and TatC subunits, and a separate TatA complex, containing only TatA subunits. Substrates initially bind to the TatABC complex, which probably triggers association of the separate TatA complex to form the active translocon.

The protein resides in the cell inner membrane. Functionally, part of the twin-arginine translocation (Tat) system that transports large folded proteins containing a characteristic twin-arginine motif in their signal peptide across membranes. TatA could form the protein-conducting channel of the Tat system. This chain is Sec-independent protein translocase protein TatA, found in Stenotrophomonas maltophilia (strain R551-3).